Consider the following 1424-residue polypeptide: DNA-directed RNA polymerase subunit beta' (1424 aa).

Positions 60, 62, 75, and 78 each coordinate Zn(2+). Mg(2+) is bound by residues Asp449, Asp451, and Asp453. 4 residues coordinate Zn(2+): Cys783, Cys857, Cys864, and Cys867.

The protein belongs to the RNA polymerase beta' chain family. As to quaternary structure, the RNAP catalytic core consists of 2 alpha, 1 beta, 1 beta' and 1 omega subunit. When a sigma factor is associated with the core the holoenzyme is formed, which can initiate transcription. Requires Mg(2+) as cofactor. It depends on Zn(2+) as a cofactor.

The catalysed reaction is RNA(n) + a ribonucleoside 5'-triphosphate = RNA(n+1) + diphosphate. DNA-dependent RNA polymerase catalyzes the transcription of DNA into RNA using the four ribonucleoside triphosphates as substrates. This is DNA-directed RNA polymerase subunit beta' from Treponema denticola (strain ATCC 35405 / DSM 14222 / CIP 103919 / JCM 8153 / KCTC 15104).